A 621-amino-acid polypeptide reads, in one-letter code: 1-deoxy-D-xylulose-5-phosphate synthase (621 aa).

Thiamine diphosphate-binding positions include H80 and 121-123 (GHS). D152 is a Mg(2+) binding site. Residues 153–154 (GA), N181, Y288, and E370 each bind thiamine diphosphate. A Mg(2+)-binding site is contributed by N181.

The protein belongs to the transketolase family. DXPS subfamily. As to quaternary structure, homodimer. Mg(2+) is required as a cofactor. The cofactor is thiamine diphosphate.

It carries out the reaction D-glyceraldehyde 3-phosphate + pyruvate + H(+) = 1-deoxy-D-xylulose 5-phosphate + CO2. The protein operates within metabolic intermediate biosynthesis; 1-deoxy-D-xylulose 5-phosphate biosynthesis; 1-deoxy-D-xylulose 5-phosphate from D-glyceraldehyde 3-phosphate and pyruvate: step 1/1. Functionally, catalyzes the acyloin condensation reaction between C atoms 2 and 3 of pyruvate and glyceraldehyde 3-phosphate to yield 1-deoxy-D-xylulose-5-phosphate (DXP). This is 1-deoxy-D-xylulose-5-phosphate synthase from Erwinia tasmaniensis (strain DSM 17950 / CFBP 7177 / CIP 109463 / NCPPB 4357 / Et1/99).